A 204-amino-acid polypeptide reads, in one-letter code: Refilin-A (204 aa).

A disordered region spans residues 1–52; it reads MVGHLHLQAMGDTREQSRDGLLDSPDSGLPPSPSPSPPFYALSPGTLDTRTT. Positions 12 to 21 are enriched in basic and acidic residues; sequence DTREQSRDGL. Pro residues predominate over residues 28–38; that stretch reads GLPPSPSPSPP. Position 151 is an asymmetric dimethylarginine (Arg151).

This sequence belongs to the Refilin family. As to quaternary structure, interacts with FLNA and FLNB. As to expression, detected in various tissues, with highest expression in lung, followed by spleen.

Its subcellular location is the cytoplasm. It is found in the cytoskeleton. Its function is as follows. Involved in the regulation of the perinuclear actin network and nuclear shape through interaction with filamins. Plays an essential role in the formation of cartilaginous skeletal elements. This is Refilin-A (Rflna) from Mus musculus (Mouse).